A 501-amino-acid polypeptide reads, in one-letter code: Aldehyde dehydrogenase 1A1 (501 aa).

Residue serine 2 is modified to N-acetylserine. Lysine 91 and lysine 128 each carry N6-acetyllysine. Residues 167 to 170 (IPWN), 193 to 196 (KPAE), 226 to 227 (GP), and 246 to 247 (GS) each bind NAD(+). Position 252 is an N6-acetyllysine (lysine 252). Glutamate 269 functions as the Proton acceptor in the catalytic mechanism. Residue 269 to 271 (ELG) participates in NAD(+) binding. The active-site Nucleophile is the cysteine 303. A mediates interaction with PRMT3 region spans residues 336 to 501 (LTPGVTQGPQ…VTVKISQKNS (166 aa)). Threonine 337 is modified (phosphothreonine). An NAD(+)-binding site is contributed by 349–353 (EQYDK). An N6-acetyllysine mark is found at lysine 353 and lysine 367. 400–402 (EIF) lines the NAD(+) pocket. Lysine 410 bears the N6-acetyllysine mark. Serine 413 is modified (phosphoserine). N6-acetyllysine is present on residues lysine 419, lysine 435, and lysine 495.

It belongs to the aldehyde dehydrogenase family. Homotetramer. Interacts with PRMT3; the interaction is direct, inhibits ALDH1A1 aldehyde dehydrogenase activity and is independent of the methyltransferase activity of PRMT3. In terms of processing, the N-terminus is blocked most probably by acetylation. In terms of tissue distribution, expressed by erythrocytes (at protein level).

It localises to the cytoplasm. Its subcellular location is the cytosol. The protein resides in the cell projection. It is found in the axon. The enzyme catalyses an aldehyde + NAD(+) + H2O = a carboxylate + NADH + 2 H(+). It carries out the reaction all-trans-retinal + NAD(+) + H2O = all-trans-retinoate + NADH + 2 H(+). The catalysed reaction is 9-cis-retinal + NAD(+) + H2O = 9-cis-retinoate + NADH + 2 H(+). It catalyses the reaction 11-cis-retinal + NAD(+) + H2O = 11-cis-retinoate + NADH + 2 H(+). The enzyme catalyses 13-cis-retinal + NAD(+) + H2O = 13-cis-retinoate + NADH + 2 H(+). It carries out the reaction 3-deoxyglucosone + NAD(+) + H2O = 2-dehydro-3-deoxy-D-gluconate + NADH + 2 H(+). The catalysed reaction is (E)-4-hydroxynon-2-enal + NAD(+) + H2O = (E)-4-hydroxynon-2-enoate + NADH + 2 H(+). It catalyses the reaction malonaldehyde + NAD(+) + H2O = 3-oxopropanoate + NADH + 2 H(+). The enzyme catalyses hexanal + NAD(+) + H2O = hexanoate + NADH + 2 H(+). It carries out the reaction propanal + NAD(+) + H2O = propanoate + NADH + 2 H(+). The catalysed reaction is acetaldehyde + NAD(+) + H2O = acetate + NADH + 2 H(+). It catalyses the reaction benzaldehyde + NAD(+) + H2O = benzoate + NADH + 2 H(+). The enzyme catalyses 4-aminobutanal + NAD(+) + H2O = 4-aminobutanoate + NADH + 2 H(+). It functions in the pathway cofactor metabolism; retinol metabolism. With respect to regulation, inhibited by citral, disulfiram, and cyanamide. Activated by diethylstilbestrol. Inhibited by duocarmycin analogs. Its function is as follows. Cytosolic dehydrogenase that catalyzes the irreversible oxidation of a wide range of aldehydes to their corresponding carboxylic acid. Functions downstream of retinol dehydrogenases and catalyzes the oxidation of retinaldehyde into retinoic acid, the second step in the oxidation of retinol/vitamin A into retinoic acid. This pathway is crucial to control the levels of retinol and retinoic acid, two important molecules which excess can be teratogenic and cytotoxic. Also oxidizes aldehydes resulting from lipid peroxidation like (E)-4-hydroxynon-2-enal/HNE, malonaldehyde and hexanal that form protein adducts and are highly cytotoxic. By participating for instance to the clearance of (E)-4-hydroxynon-2-enal/HNE in the lens epithelium prevents the formation of HNE-protein adducts and lens opacification. Also functions downstream of fructosamine-3-kinase in the fructosamine degradation pathway by catalyzing the oxidation of 3-deoxyglucosone, the carbohydrate product of fructosamine 3-phosphate decomposition, which is itself a potent glycating agent that may react with lysine and arginine side-chains of proteins. Also has an aminobutyraldehyde dehydrogenase activity and is probably part of an alternative pathway for the biosynthesis of GABA/4-aminobutanoate in midbrain, thereby playing a role in GABAergic synaptic transmission. This Homo sapiens (Human) protein is Aldehyde dehydrogenase 1A1.